A 398-amino-acid polypeptide reads, in one-letter code: SEC12-like protein 1 (398 aa).

Position 1 is an N-acetylmethionine (M1). Topologically, residues 1 to 337 (MEIEEASRES…TVPKEWKEWQ (337 aa)) are cytoplasmic. WD repeat units lie at residues 71-110 (DSDGDPVAVSVHPGGDYFVCSTSKGGCKLFELVGGATGIT), 120-159 (QNAGLQKCMAFSFDGSKLAVGGVDGCLRIMEWPNLSVILD), 162-201 (KAHKSIRDMDFSLDSEFLATTSTDGSARIWKAEDGFPLST), 252-291 (LSRKTASTMAVSLDGKYIALGGKDGDVSVAEVKTMEIYHY), and 296-334 (HLGQSIASLEFCPSERVMLTTSSEWGEMVTKLTVPKEWK). A helical transmembrane segment spans residues 338-358 (IYALLFCLFMASVIAAYVFFE). Residues 359–398 (NSDSFWKLPMGKDQKRPKISLFGGSSSTPSEDHSRWNLDL) are Lumenal-facing.

Ubiquitous with higher levels in flowers, roots and senescing leaves.

It is found in the endoplasmic reticulum membrane. Functionally, involved in Pi uptake by facilitating the trafficking of PHT1-1/PHT1;1 from the endoplasmic reticulum to the plasma membrane. The sequence is that of SEC12-like protein 1 (PHF1) from Arabidopsis thaliana (Mouse-ear cress).